The sequence spans 729 residues: Ribosomal RNA large subunit methyltransferase K/L (729 aa).

The 112-residue stretch at 47–158 folds into the THUMP domain; it reads TFYRLCLWSR…KNELTLALDL (112 aa).

This sequence belongs to the methyltransferase superfamily. RlmKL family.

Its subcellular location is the cytoplasm. The catalysed reaction is guanosine(2445) in 23S rRNA + S-adenosyl-L-methionine = N(2)-methylguanosine(2445) in 23S rRNA + S-adenosyl-L-homocysteine + H(+). It carries out the reaction guanosine(2069) in 23S rRNA + S-adenosyl-L-methionine = N(2)-methylguanosine(2069) in 23S rRNA + S-adenosyl-L-homocysteine + H(+). In terms of biological role, specifically methylates the guanine in position 2445 (m2G2445) and the guanine in position 2069 (m7G2069) of 23S rRNA. The sequence is that of Ribosomal RNA large subunit methyltransferase K/L from Dichelobacter nodosus (strain VCS1703A).